The sequence spans 881 residues: Disks large homolog 2 (881 aa).

2 disordered regions span residues 16–41 (HRQQ…MNPA) and 63–88 (LSTT…SFPR). PDZ domains follow at residues 155–242 (EITL…RRRR), 250–337 (EIKL…GKPT), and 424–505 (KIVL…QYRP). An SH3 domain is found at 539 to 609 (KRSLYVRALF…PSKRRVERKE (71 aa)). A Guanylate kinase-like domain is found at 683 to 866 (ARPVIILGPM…IYNQCKMVIE (184 aa)). Positions 709–729 (GSCVPPANSSDQEDTTRPKRD) are disordered.

Belongs to the MAGUK family.

It localises to the cell membrane. The protein resides in the postsynaptic density. Its subcellular location is the synapse. The protein localises to the membrane. It is found in the cell projection. It localises to the axon. The protein resides in the perikaryon. May play a role in synapse assembly and function. This chain is Disks large homolog 2 (dlg2), found in Danio rerio (Zebrafish).